The sequence spans 323 residues: Annexin A5 (323 aa).

Annexin repeat units follow at residues 17 to 88 (FNDK…ALMV), 89 to 160 (PAHL…SLVQ), 172 to 244 (GQVE…AVVK), and 248 to 319 (SIQG…LLCG).

Belongs to the annexin family.

Functionally, calcium/phospholipid-binding protein which promotes membrane fusion and is involved in exocytosis. This chain is Annexin A5, found in Cynops pyrrhogaster (Japanese fire-bellied newt).